The chain runs to 1086 residues: Transcription initiation factor TFIID subunit 2 (1086 aa).

A compositionally biased stretch (polar residues) spans 1-11 (MDFSEASTSGD). Disordered stretches follow at residues 1–53 (MDFS…PPPV) and 1064–1086 (GYEA…NLMQ). 2 stretches are compositionally biased toward pro residues: residues 19-36 (PFPP…PPLA) and 44-53 (APPPLQPPPV). Basic and acidic residues predominate over residues 1067–1078 (AARRSPPRRDFG).

This sequence belongs to the TAF2 family. Component of the TFIID basal transcription factor complex, composed of TATA-box-binding protein tbp-1, and a number of TBP-associated factors (TAFs).

It is found in the nucleus. Its function is as follows. The TFIID basal transcription factor complex plays a major role in the initiation of RNA polymerase II (Pol II)-dependent transcription. TFIID recognizes and binds promoters via its subunit tbp-1, a TATA-box-binding protein, and promotes assembly of the pre-initiation complex (PIC). The TFIID complex consists of tbp-1 and TBP-associated factors (TAFs), including taf-2. May regulate RNA polymerase II activity and thereby may control transcription initiation by RNA polymerase II. The protein is Transcription initiation factor TFIID subunit 2 of Caenorhabditis elegans.